We begin with the raw amino-acid sequence, 217 residues long: Large ribosomal subunit protein uL3 (217 aa).

Positions 127 to 162 (GFSRGPMSHGSKNHRAPGSTGAGTTPGRIYPGKRMA) are disordered. Residues 142–153 (APGSTGAGTTPG) show a composition bias toward low complexity.

Belongs to the universal ribosomal protein uL3 family. Part of the 50S ribosomal subunit. Forms a cluster with proteins L14 and L19.

In terms of biological role, one of the primary rRNA binding proteins, it binds directly near the 3'-end of the 23S rRNA, where it nucleates assembly of the 50S subunit. This Prochlorococcus marinus (strain MIT 9312) protein is Large ribosomal subunit protein uL3.